Reading from the N-terminus, the 256-residue chain is 1-(5-phosphoribosyl)-5-[(5-phosphoribosylamino)methylideneamino] imidazole-4-carboxamide isomerase (256 aa).

D8 functions as the Proton acceptor in the catalytic mechanism. Catalysis depends on D129, which acts as the Proton donor.

This sequence belongs to the HisA/HisF family.

It localises to the cytoplasm. The enzyme catalyses 1-(5-phospho-beta-D-ribosyl)-5-[(5-phospho-beta-D-ribosylamino)methylideneamino]imidazole-4-carboxamide = 5-[(5-phospho-1-deoxy-D-ribulos-1-ylimino)methylamino]-1-(5-phospho-beta-D-ribosyl)imidazole-4-carboxamide. It functions in the pathway amino-acid biosynthesis; L-histidine biosynthesis; L-histidine from 5-phospho-alpha-D-ribose 1-diphosphate: step 4/9. This is 1-(5-phosphoribosyl)-5-[(5-phosphoribosylamino)methylideneamino] imidazole-4-carboxamide isomerase from Syntrophobacter fumaroxidans (strain DSM 10017 / MPOB).